Reading from the N-terminus, the 391-residue chain is Probable malate dehydrogenase 1 (391 aa).

68–74 (GAAGQIA) provides a ligand contact to NAD(+). Residues arginine 149 and arginine 155 each coordinate substrate. NAD(+) is bound by residues asparagine 162, glutamine 169, and 186–188 (VGN). 2 residues coordinate substrate: asparagine 188 and arginine 219. The active-site Proton acceptor is histidine 244.

This sequence belongs to the LDH/MDH superfamily. MDH type 2 family. In terms of assembly, homodimer.

The catalysed reaction is (S)-malate + NAD(+) = oxaloacetate + NADH + H(+). In terms of biological role, catalyzes the reversible oxidation of malate to oxaloacetate. This Dictyostelium discoideum (Social amoeba) protein is Probable malate dehydrogenase 1 (mdhA).